Here is a 286-residue protein sequence, read N- to C-terminus: Sulfur carrier protein FdhD (286 aa).

Residue C110 is the Cysteine persulfide intermediate of the active site. 247–252 (FARGEK) contributes to the Mo-bis(molybdopterin guanine dinucleotide) binding site.

It belongs to the FdhD family.

The protein resides in the cytoplasm. In terms of biological role, required for formate dehydrogenase (FDH) activity. Acts as a sulfur carrier protein that transfers sulfur from IscS to the molybdenum cofactor prior to its insertion into FDH. This is Sulfur carrier protein FdhD from Wolinella succinogenes (strain ATCC 29543 / DSM 1740 / CCUG 13145 / JCM 31913 / LMG 7466 / NCTC 11488 / FDC 602W) (Vibrio succinogenes).